Consider the following 199-residue polypeptide: MKSWKVKEIVIMSVISIVFAVVYLLFTHFGNVLAGMFGPIAYEPIYGIWFIVSVIAAYMIRKPGAALVSEIIAALVECLLGNPSGPMVIVIGIVQGLGAEAVFLATRWKAYSLPVLMLAGMGSSVASFIYDLFVSGYAAYSPGYLLIMLVIRLISGALLAGLLGKAVSDSLAYTGVLNGMALGKELKKKRKRASEHASL.

6 helical membrane passes run 9-29 (IVIM…FTHF), 40-60 (IAYE…AYMI), 63-83 (PGAA…LGNP), 85-105 (GPMV…VFLA), 114-134 (PVLM…DLFV), and 143-163 (GYLL…AGLL).

The complex is composed of two ATP-binding proteins (YkoD), two transmembrane proteins (YkoC and YkoE) and a solute-binding protein (YkoF).

It is found in the cell membrane. In terms of biological role, part of the ABC transporter complex YkoCDEF that could transport hydroxymethylpyrimidine (HMP) and/or thiamine. Could also transport other HMP-containing products. Probably responsible for the translocation of the substrate across the membrane. The sequence is that of Putative HMP/thiamine permease protein YkoE (ykoE) from Bacillus subtilis (strain 168).